Consider the following 232-residue polypeptide: RNA chaperone ProQ (232 aa).

Positions 105–182 (EAKARVQAQR…REEQHTPVSD (78 aa)) are disordered. Basic and acidic residues predominate over residues 117–136 (QQAKKREAAAAAGEKEDAPR). Positions 137–146 (RERKPRPTTP) are enriched in basic residues. The span at 147–177 (RRKEGAERKPRAQKSVEKAPKTVKAPREEQH) shows a compositional bias: basic and acidic residues.

This sequence belongs to the ProQ family.

The protein resides in the cytoplasm. Functionally, RNA chaperone with significant RNA binding, RNA strand exchange and RNA duplexing activities. May regulate ProP activity through an RNA-based, post-transcriptional mechanism. The sequence is that of RNA chaperone ProQ from Escherichia coli O7:K1 (strain IAI39 / ExPEC).